The following is a 266-amino-acid chain: GATA-type zinc finger protein 1 (266 aa).

Disordered regions lie at residues 1-31, 106-129, and 171-191; these read MEAA…KSRP, TQCP…PRKQ, and CSQK…SSEA. Polar residues predominate over residues 106 to 121; sequence TQCPNLEISSATSPAS. The GATA-type zinc finger occupies 197–221; sequence CASCRTQRTPLWRDAEDGTPLCNAC.

Specifically expressed in adult testis and ovary. Expressed at high levels in the somatic cells of the developing gonads, including Leydig cells in the testes and granulosa cells in the ovaries.

The protein localises to the nucleus. Its function is as follows. Transcriptional regulator that plays a key role in germ cell development. Determines the oogenic fate by activating key genes for the oogenic program and meiotic prophase entry. Acts downstream of bone morphogenetic protein (BMP) by regulating expression of genes required for the oogenic programs, which are repressed by Polycomb activities in sexually uncommitted germ cells. Regulates expression of STRA8, a central downstream effector for the meiotic program. Acts independently of retinoic acid (RA). In males, not required for germ-cell sex determination, but required to allow the spermatogonia to efficiently accomplish the meiotic prophase. This Mus musculus (Mouse) protein is GATA-type zinc finger protein 1.